A 356-amino-acid polypeptide reads, in one-letter code: 5-formaminoimidazole-4-carboxamide-1-(beta)-D-ribofuranosyl 5'-monophosphate synthetase 1 (356 aa).

Positions 27 and 94 each coordinate 5-amino-1-(5-phospho-beta-D-ribosyl)imidazole-4-carboxamide. Positions 101–333 (TENFAEMAVP…YADLIQEDLS (233 aa)) constitute an ATP-grasp domain. Residues 145–196 (PRDI…TRYY) and Glu-226 contribute to the ATP site. Asn-255 is a binding site for 5-amino-1-(5-phospho-beta-D-ribosyl)imidazole-4-carboxamide. Residues Glu-293 and Glu-306 each coordinate Mg(2+).

It belongs to the phosphohexose mutase family. Mg(2+) is required as a cofactor. It depends on Mn(2+) as a cofactor.

It catalyses the reaction 5-amino-1-(5-phospho-beta-D-ribosyl)imidazole-4-carboxamide + formate + ATP = 5-formamido-1-(5-phospho-D-ribosyl)imidazole-4-carboxamide + ADP + phosphate. It functions in the pathway purine metabolism; IMP biosynthesis via de novo pathway; 5-formamido-1-(5-phospho-D-ribosyl)imidazole-4-carboxamide from 5-amino-1-(5-phospho-D-ribosyl)imidazole-4-carboxamide (formate route): step 1/1. In terms of biological role, catalyzes the ATP- and formate-dependent formylation of 5-aminoimidazole-4-carboxamide-1-beta-d-ribofuranosyl 5'-monophosphate (AICAR) to 5-formaminoimidazole-4-carboxamide-1-beta-d-ribofuranosyl 5'-monophosphate (FAICAR) in the absence of folates. The sequence is that of 5-formaminoimidazole-4-carboxamide-1-(beta)-D-ribofuranosyl 5'-monophosphate synthetase 1 from Methanosarcina mazei (strain ATCC BAA-159 / DSM 3647 / Goe1 / Go1 / JCM 11833 / OCM 88) (Methanosarcina frisia).